Reading from the N-terminus, the 164-residue chain is Ubiquitin-fold modifier-conjugating enzyme 1 (164 aa).

Residue Cys116 is the Glycyl thioester intermediate of the active site.

Belongs to the ubiquitin-conjugating enzyme family. UFC1 subfamily.

Its function is as follows. E2-like enzyme which forms an intermediate with UFM1 via a thioester linkage. In Drosophila ananassae (Fruit fly), this protein is Ubiquitin-fold modifier-conjugating enzyme 1.